A 522-amino-acid polypeptide reads, in one-letter code: Peptide chain release factor 3 (522 aa).

Positions 10 to 277 constitute a tr-type G domain; that stretch reads ASRKTFAIIS…TFVDFAPAPS (268 aa). Residues 19 to 26, 87 to 91, and 141 to 144 each bind GTP; these read SHPDAGKT, DTPGH, and NKMD.

The protein belongs to the TRAFAC class translation factor GTPase superfamily. Classic translation factor GTPase family. PrfC subfamily.

It is found in the cytoplasm. Functionally, increases the formation of ribosomal termination complexes and stimulates activities of RF-1 and RF-2. It binds guanine nucleotides and has strong preference for UGA stop codons. It may interact directly with the ribosome. The stimulation of RF-1 and RF-2 is significantly reduced by GTP and GDP, but not by GMP. In Listeria monocytogenes serovar 1/2a (strain ATCC BAA-679 / EGD-e), this protein is Peptide chain release factor 3.